A 527-amino-acid chain; its full sequence is UDP-glucuronosyltransferase 2A3 (527 aa).

Residues 1–23 (MRSEKSALVFLLLQLFCVGCGFC) form the signal peptide. The Extracellular portion of the chain corresponds to 24-486 (GKVLVWPCDM…AAHNLTWFQH (463 aa)). A glycan (N-linked (GlcNAc...) asparagine) is linked at Asn-313. The helical transmembrane segment at 487–507 (YSIDVIGFLLACVATAIFLFT) threads the bilayer. The Cytoplasmic portion of the chain corresponds to 508–523 (KCCLFSCQKFNKTRKI).

It belongs to the UDP-glycosyltransferase family.

The protein resides in the membrane. The catalysed reaction is glucuronate acceptor + UDP-alpha-D-glucuronate = acceptor beta-D-glucuronoside + UDP + H(+). Functionally, UDP-glucuronosyltransferases catalyze phase II biotransformation reactions in which lipophilic substrates are conjugated with glucuronic acid to increase water solubility and enhance excretion. They are of major importance in the conjugation and subsequent elimination of potentially toxic xenobiotics and endogenous compounds. The sequence is that of UDP-glucuronosyltransferase 2A3 (UGT2A3) from Pongo abelii (Sumatran orangutan).